The chain runs to 103 residues: MHVKKGDKVKVITGKDKGKSGKVLAAFPKKDRVLIEGINMVKKHTKPSNVNPQGGILNVEAPIHVSNVMLIDPKTGEPTRVGYEVKGDKKVRVAKKSGEVIDK.

The protein belongs to the universal ribosomal protein uL24 family. As to quaternary structure, part of the 50S ribosomal subunit.

Functionally, one of two assembly initiator proteins, it binds directly to the 5'-end of the 23S rRNA, where it nucleates assembly of the 50S subunit. One of the proteins that surrounds the polypeptide exit tunnel on the outside of the subunit. The sequence is that of Large ribosomal subunit protein uL24 from Listeria monocytogenes serotype 4a (strain HCC23).